The sequence spans 285 residues: Bifunctional protein FolD (285 aa).

NADP(+) is bound by residues 165 to 167 (GRS) and Ser190.

It belongs to the tetrahydrofolate dehydrogenase/cyclohydrolase family. In terms of assembly, homodimer.

The enzyme catalyses (6R)-5,10-methylene-5,6,7,8-tetrahydrofolate + NADP(+) = (6R)-5,10-methenyltetrahydrofolate + NADPH. It carries out the reaction (6R)-5,10-methenyltetrahydrofolate + H2O = (6R)-10-formyltetrahydrofolate + H(+). The protein operates within one-carbon metabolism; tetrahydrofolate interconversion. Its function is as follows. Catalyzes the oxidation of 5,10-methylenetetrahydrofolate to 5,10-methenyltetrahydrofolate and then the hydrolysis of 5,10-methenyltetrahydrofolate to 10-formyltetrahydrofolate. This Burkholderia cenocepacia (strain HI2424) protein is Bifunctional protein FolD.